Reading from the N-terminus, the 305-residue chain is NAD kinase 2 (305 aa).

Asp78 (proton acceptor) is an active-site residue. NAD(+) contacts are provided by residues 78-79 (DG), 152-153 (NE), Asp182, 193-198 (TAYSLS), and Asn251.

Belongs to the NAD kinase family. Requires a divalent metal cation as cofactor.

The protein resides in the cytoplasm. The enzyme catalyses NAD(+) + ATP = ADP + NADP(+) + H(+). Its function is as follows. Involved in the regulation of the intracellular balance of NAD and NADP, and is a key enzyme in the biosynthesis of NADP. Catalyzes specifically the phosphorylation on 2'-hydroxyl of the adenosine moiety of NAD to yield NADP. The sequence is that of NAD kinase 2 from Trichormus variabilis (strain ATCC 29413 / PCC 7937) (Anabaena variabilis).